Reading from the N-terminus, the 553-residue chain is Adenine deaminase (553 aa).

It belongs to the metallo-dependent hydrolases superfamily. Adenine deaminase family. Requires Mn(2+) as cofactor.

The catalysed reaction is adenine + H2O + H(+) = hypoxanthine + NH4(+). This Methanosarcina acetivorans (strain ATCC 35395 / DSM 2834 / JCM 12185 / C2A) protein is Adenine deaminase.